A 315-amino-acid polypeptide reads, in one-letter code: Probable cell division protein WhiA (315 aa).

A DNA-binding region (H-T-H motif) is located at residues 277–311; the sequence is SLQELGAMMPSGQISKSGVNHRLRKLNQIAEGYQQ.

The protein belongs to the WhiA family.

Involved in cell division and chromosome segregation. The polypeptide is Probable cell division protein WhiA (Lacticaseibacillus paracasei (strain ATCC 334 / BCRC 17002 / CCUG 31169 / CIP 107868 / KCTC 3260 / NRRL B-441) (Lactobacillus paracasei)).